The following is a 734-amino-acid chain: Ribosomal RNA large subunit methyltransferase K/L (734 aa).

One can recognise a THUMP domain in the interval 49–167; sequence HAYRICMWSR…KTEHTYCLDL (119 aa).

It belongs to the methyltransferase superfamily. RlmKL family.

Its subcellular location is the cytoplasm. The catalysed reaction is guanosine(2445) in 23S rRNA + S-adenosyl-L-methionine = N(2)-methylguanosine(2445) in 23S rRNA + S-adenosyl-L-homocysteine + H(+). It catalyses the reaction guanosine(2069) in 23S rRNA + S-adenosyl-L-methionine = N(2)-methylguanosine(2069) in 23S rRNA + S-adenosyl-L-homocysteine + H(+). Its function is as follows. Specifically methylates the guanine in position 2445 (m2G2445) and the guanine in position 2069 (m7G2069) of 23S rRNA. The protein is Ribosomal RNA large subunit methyltransferase K/L of Acinetobacter baumannii (strain SDF).